A 127-amino-acid polypeptide reads, in one-letter code: Small ribosomal subunit protein bS6 (127 aa).

The protein belongs to the bacterial ribosomal protein bS6 family.

Binds together with bS18 to 16S ribosomal RNA. The sequence is that of Small ribosomal subunit protein bS6 from Buchnera aphidicola subsp. Cinara cedri (strain Cc).